A 163-amino-acid chain; its full sequence is Beta-carbonic anhydrase 1 (163 aa).

Zn(2+) contacts are provided by C35, D37, H88, and C91.

Belongs to the beta-class carbonic anhydrase family. As to quaternary structure, homotetramer. Zn(2+) serves as cofactor.

The enzyme catalyses hydrogencarbonate + H(+) = CO2 + H2O. Its function is as follows. Catalyzes the reversible hydration of carbon dioxide to form bicarbonate. The protein is Beta-carbonic anhydrase 1 of Mycobacterium bovis (strain ATCC BAA-935 / AF2122/97).